We begin with the raw amino-acid sequence, 945 residues long: MSNKKADSKPQSRYPVNLLDTPFPMRGDLPKREPQWVKEWQERKVYETIRAASKGRKKFILHDGPPYANGDIHLGHAVNKILKDMIVKARNLAGFDAVYVPGWDCHGMPIEIQIEKQFGKSLPAAEVMQKARAYATEQIEKQKVGFRRLGVLGDWDNPYKTMNFTNEAGEIRALAKIMEKGYVFRGLKPVNWCFDCGSALAEAEVEYKDKTDPTIDVLFSFAEPEKTAQAFGLSALPREEGGIVIWTTTPWTIPANQALNLHPEIVYALVDTPRGLLILAEERVEACLKLYGLEGTIVATAPGAKLVNVRFNHPLASAHPGYKRTAPVFLGDYVTTETGTGIVHSSPAYGVEDFVSCKAHGMADSDIINPVMGDGRYIESLALFGGLSIWAANPQIVEALQGAGSLMRTEKYTHSYMHCWRHKTPIIYRATSQWFAGMDVKPNDTDKTLRETALEGIENTAFYPAWGKQRLFSMIANRPDWTLSRQRQWGVPMAFFVHKETGELHPRTLELLEEVAQRVEKAGIEAWQTLDPRELLGDDANMYEKNRDTLDVWFDSGTTHWHVLRGSHKDELQFPADLYLEGSDQHRGWFHSSLLTASMLDGRPPYNALLTHGFTVDGEGRKMSKSLGNGIDPHEVANRLGAEIIRLWIASTDYSGELAISEEILKRVTEGYRRIRNTLRFLLANLSDFDFAQHARPVEDWLEIDRYAVALSTNLQNDILSHYDKYEFHPVVAKLQTFCSEDLGGFYLDVLKDRLYTTAADSVARRSAQTALYHIAHGLLRLMAPFLSFTAEEAWKIFQPNSETIFTETYHAFPAVPDAGALLDKWTLLRAARSDVTKALEEARVANLIGSSLQAEVEIRASGARYDALTSLGDDLKFVLITSAATVVKVDSEAEEAVEVIASKYLKCERCWHYRADVGANAEHPTLCDRCFSNLFGNGEIRSAA.

Residues Pro-66–His-76 carry the 'HIGH' region motif. Glu-581 contacts L-isoleucyl-5'-AMP. The 'KMSKS' region signature appears at Lys-622–Ser-626. Lys-625 serves as a coordination point for ATP. The Zn(2+) site is built by Cys-908, Cys-911, Cys-928, and Cys-931.

The protein belongs to the class-I aminoacyl-tRNA synthetase family. IleS type 1 subfamily. In terms of assembly, monomer. Zn(2+) serves as cofactor.

Its subcellular location is the cytoplasm. It catalyses the reaction tRNA(Ile) + L-isoleucine + ATP = L-isoleucyl-tRNA(Ile) + AMP + diphosphate. Functionally, catalyzes the attachment of isoleucine to tRNA(Ile). As IleRS can inadvertently accommodate and process structurally similar amino acids such as valine, to avoid such errors it has two additional distinct tRNA(Ile)-dependent editing activities. One activity is designated as 'pretransfer' editing and involves the hydrolysis of activated Val-AMP. The other activity is designated 'posttransfer' editing and involves deacylation of mischarged Val-tRNA(Ile). In Paraburkholderia phytofirmans (strain DSM 17436 / LMG 22146 / PsJN) (Burkholderia phytofirmans), this protein is Isoleucine--tRNA ligase.